The primary structure comprises 407 residues: tRNA pseudouridine synthase Pus10 (407 aa).

The active-site Nucleophile is the D232. Residues Y300 and Y369 each contribute to the substrate site.

Belongs to the pseudouridine synthase Pus10 family.

The enzyme catalyses uridine(54) in tRNA = pseudouridine(54) in tRNA. It carries out the reaction uridine(55) in tRNA = pseudouridine(55) in tRNA. Functionally, responsible for synthesis of pseudouridine from uracil-54 and uracil-55 in the psi GC loop of transfer RNAs. This chain is tRNA pseudouridine synthase Pus10, found in Methanosphaera stadtmanae (strain ATCC 43021 / DSM 3091 / JCM 11832 / MCB-3).